A 217-amino-acid chain; its full sequence is Phosphatidylserine decarboxylase proenzyme (217 aa).

The Schiff-base intermediate with substrate; via pyruvic acid role is filled by S183. S183 is modified (pyruvic acid (Ser); by autocatalysis).

This sequence belongs to the phosphatidylserine decarboxylase family. PSD-A subfamily. In terms of assembly, heterodimer of a large membrane-associated beta subunit and a small pyruvoyl-containing alpha subunit. Pyruvate serves as cofactor. In terms of processing, is synthesized initially as an inactive proenzyme. Formation of the active enzyme involves a self-maturation process in which the active site pyruvoyl group is generated from an internal serine residue via an autocatalytic post-translational modification. Two non-identical subunits are generated from the proenzyme in this reaction, and the pyruvate is formed at the N-terminus of the alpha chain, which is derived from the carboxyl end of the proenzyme. The post-translation cleavage follows an unusual pathway, termed non-hydrolytic serinolysis, in which the side chain hydroxyl group of the serine supplies its oxygen atom to form the C-terminus of the beta chain, while the remainder of the serine residue undergoes an oxidative deamination to produce ammonia and the pyruvoyl prosthetic group on the alpha chain.

The protein localises to the cell membrane. It carries out the reaction a 1,2-diacyl-sn-glycero-3-phospho-L-serine + H(+) = a 1,2-diacyl-sn-glycero-3-phosphoethanolamine + CO2. Its pathway is phospholipid metabolism; phosphatidylethanolamine biosynthesis; phosphatidylethanolamine from CDP-diacylglycerol: step 2/2. In terms of biological role, catalyzes the formation of phosphatidylethanolamine (PtdEtn) from phosphatidylserine (PtdSer). The sequence is that of Phosphatidylserine decarboxylase proenzyme from Cupriavidus pinatubonensis (strain JMP 134 / LMG 1197) (Cupriavidus necator (strain JMP 134)).